The chain runs to 120 residues: NADH-ubiquinone oxidoreductase chain 3 (120 aa).

Helical transmembrane passes span 10–30, 62–82, and 89–109; these read ILIL…LGYF, FYLV…LFPF, and MTLF…IGFI.

This sequence belongs to the complex I subunit 3 family.

The protein resides in the mitochondrion membrane. It carries out the reaction a ubiquinone + NADH + 5 H(+)(in) = a ubiquinol + NAD(+) + 4 H(+)(out). Functionally, core subunit of the mitochondrial membrane respiratory chain NADH dehydrogenase (Complex I) that is believed to belong to the minimal assembly required for catalysis. Complex I functions in the transfer of electrons from NADH to the respiratory chain. The immediate electron acceptor for the enzyme is believed to be ubiquinone. The polypeptide is NADH-ubiquinone oxidoreductase chain 3 (nad3) (Dictyostelium citrinum (Slime mold)).